The chain runs to 334 residues: Protein U17/U16 (334 aa).

It belongs to the herpesviridae US22 family.

In terms of biological role, isoform 3 can transactivate the human immunodeficiency virus type 1 promoter. This chain is Protein U17/U16 (U17/U16), found in Human herpesvirus 6A (strain Uganda-1102) (HHV-6 variant A).